The chain runs to 268 residues: LOB domain-containing protein 13 (268 aa).

Residues 51 to 152 (TPCAACKLLR…SELTTVRTEI (102 aa)) form the LOB domain. Residues 191-268 (LLPPPPPPPP…SSDNNVHYFD (78 aa)) form a disordered region. Composition is skewed to pro residues over residues 192–205 (LPPP…PRPP) and 212–222 (PAPPPTPPVSL). Over residues 223–243 (PSPSMVVSSSSSSNSSATNSM) the composition is skewed to low complexity. Positions 250–268 (STAGYSNSLSSDNNVHYFD) are enriched in polar residues.

Belongs to the LOB domain-containing protein family. Expressed in shoots and roots and at low levels in flowers, but not in leaves or inflorescence stems.

The protein is LOB domain-containing protein 13 (LBD13) of Arabidopsis thaliana (Mouse-ear cress).